Here is a 143-residue protein sequence, read N- to C-terminus: Large ribosomal subunit protein uL11 (143 aa).

The protein belongs to the universal ribosomal protein uL11 family. Part of the ribosomal stalk of the 50S ribosomal subunit. Interacts with L10 and the large rRNA to form the base of the stalk. L10 forms an elongated spine to which L12 dimers bind in a sequential fashion forming a multimeric L10(L12)X complex. One or more lysine residues are methylated.

Forms part of the ribosomal stalk which helps the ribosome interact with GTP-bound translation factors. This Dechloromonas aromatica (strain RCB) protein is Large ribosomal subunit protein uL11.